Here is a 372-residue protein sequence, read N- to C-terminus: DNA replication and repair protein RecF (372 aa).

30–37 (GANGQGKT) contributes to the ATP binding site.

The protein belongs to the RecF family.

It localises to the cytoplasm. In terms of biological role, the RecF protein is involved in DNA metabolism; it is required for DNA replication and normal SOS inducibility. RecF binds preferentially to single-stranded, linear DNA. It also seems to bind ATP. The chain is DNA replication and repair protein RecF from Heliobacterium modesticaldum (strain ATCC 51547 / Ice1).